Here is a 174-residue protein sequence, read N- to C-terminus: NAD(P)H-quinone oxidoreductase subunit J (174 aa).

The protein belongs to the complex I 30 kDa subunit family. As to quaternary structure, NDH-1 can be composed of about 15 different subunits; different subcomplexes with different compositions have been identified which probably have different functions.

The protein resides in the cellular thylakoid membrane. The catalysed reaction is a plastoquinone + NADH + (n+1) H(+)(in) = a plastoquinol + NAD(+) + n H(+)(out). It carries out the reaction a plastoquinone + NADPH + (n+1) H(+)(in) = a plastoquinol + NADP(+) + n H(+)(out). In terms of biological role, NDH-1 shuttles electrons from an unknown electron donor, via FMN and iron-sulfur (Fe-S) centers, to quinones in the respiratory and/or the photosynthetic chain. The immediate electron acceptor for the enzyme in this species is believed to be plastoquinone. Couples the redox reaction to proton translocation, and thus conserves the redox energy in a proton gradient. Cyanobacterial NDH-1 also plays a role in inorganic carbon-concentration. This Picosynechococcus sp. (strain ATCC 27264 / PCC 7002 / PR-6) (Agmenellum quadruplicatum) protein is NAD(P)H-quinone oxidoreductase subunit J.